A 424-amino-acid chain; its full sequence is Dual-specificity RNA methyltransferase RlmN (424 aa).

Glutamate 132 (proton acceptor) is an active-site residue. The region spanning 138–388 is the Radical SAM core domain; it reads GPDRGTLCVS…VRTPRGRDIL (251 aa). Cysteine 145 and cysteine 391 are joined by a disulfide. [4Fe-4S] cluster-binding residues include cysteine 152, cysteine 156, and cysteine 159. Residues 217–218, serine 249, 271–273, and asparagine 348 contribute to the S-adenosyl-L-methionine site; these read GE and SLH. Cysteine 391 serves as the catalytic S-methylcysteine intermediate.

This sequence belongs to the radical SAM superfamily. RlmN family. [4Fe-4S] cluster serves as cofactor.

It is found in the cytoplasm. It carries out the reaction adenosine(2503) in 23S rRNA + 2 reduced [2Fe-2S]-[ferredoxin] + 2 S-adenosyl-L-methionine = 2-methyladenosine(2503) in 23S rRNA + 5'-deoxyadenosine + L-methionine + 2 oxidized [2Fe-2S]-[ferredoxin] + S-adenosyl-L-homocysteine. The catalysed reaction is adenosine(37) in tRNA + 2 reduced [2Fe-2S]-[ferredoxin] + 2 S-adenosyl-L-methionine = 2-methyladenosine(37) in tRNA + 5'-deoxyadenosine + L-methionine + 2 oxidized [2Fe-2S]-[ferredoxin] + S-adenosyl-L-homocysteine. Its function is as follows. Specifically methylates position 2 of adenine 2503 in 23S rRNA and position 2 of adenine 37 in tRNAs. m2A2503 modification seems to play a crucial role in the proofreading step occurring at the peptidyl transferase center and thus would serve to optimize ribosomal fidelity. In Methylobacterium radiotolerans (strain ATCC 27329 / DSM 1819 / JCM 2831 / NBRC 15690 / NCIMB 10815 / 0-1), this protein is Dual-specificity RNA methyltransferase RlmN.